The following is a 414-amino-acid chain: uncharacterized protein (414 aa).

The Lumenal segment spans residues 1-66; that stretch reads MNPSVPKVMK…LQRISKDYLK (66 aa). Residues 20-51 are disordered; that stretch reads SKEMNDTSLQLPSTTRSLSPKESNSNEDFNVD. A compositionally biased stretch (polar residues) spans 25–51; the sequence is DTSLQLPSTTRSLSPKESNSNEDFNVD. Lys-40 participates in a covalent cross-link: Glycyl lysine isopeptide (Lys-Gly) (interchain with G-Cter in ubiquitin). The helical transmembrane segment at 67–87 threads the bilayer; that stretch reads PNIGLVLLTVSYFFNSAMVVS. One can recognise an EamA 1 domain in the interval 78–215; sequence YFFNSAMVVS…SLLGVVLIVR (138 aa). At 88–106 the chain is on the cytoplasmic side; the sequence is TKVLENDPDDIANDRQIKP. A helical membrane pass occupies residues 107-127; sequence LQILLVRMVITYIGTLIYMYI. Topologically, residues 128 to 144 are lumenal; sequence NKSTISDVPFGKPEVRK. Residues 145–167 form a helical membrane-spanning segment; that stretch reads WLVLRGCTGFFGVFGMYYSLMYL. At 168 to 171 the chain is on the cytoplasmic side; that stretch reads TISD. A helical transmembrane segment spans residues 172 to 191; that stretch reads AVLITFLAPSLTIFLSWVIL. Residues 192-199 lie on the Lumenal side of the membrane; it reads RERFTKVE. Residues 200-220 form a helical membrane-spanning segment; sequence ALGSLISLLGVVLIVRPSFLF. The Cytoplasmic segment spans residues 221–241; sequence GTPELTDSSSQIVESSDPKSR. Residues 242–262 traverse the membrane as a helical segment; that stretch reads LIATLVGLWGVLGMSCVYIII. Residues 253-379 enclose the EamA 2 domain; sequence LGMSCVYIII…IISATLWVIR (127 aa). Residues 263-269 lie on the Lumenal side of the membrane; sequence RYIGKRA. The chain crosses the membrane as a helical span at residues 270-290; the sequence is HAIMSVSYFSLITAIVSFIGI. Topologically, residues 291–307 are cytoplasmic; the sequence is NTIPSMKFQIPHSKKQW. The helical transmembrane segment at 308–328 threads the bilayer; sequence ILFGNLGVSGFIFQLLLTMGI. Over 329–357 the chain is Lumenal; it reads QRERAGRGSLMTYTQLLYAVFWDVALYKH. Residues 358 to 378 traverse the membrane as a helical segment; the sequence is WPNIWSWIGMIIIISATLWVI. Over 379-414 the chain is Cytoplasmic; it reads RIRAANNETTAKDLTPIIDDEENSIPLTEFDLSDSK.

To yeast YPL264c.

It is found in the membrane. This is an uncharacterized protein from Saccharomyces cerevisiae (strain ATCC 204508 / S288c) (Baker's yeast).